The primary structure comprises 494 residues: Aldehyde dehydrogenase (494 aa).

223 to 228 (GSTTAG) contributes to the NAD(+) binding site. Catalysis depends on residues Glu245 and Cys279.

It belongs to the aldehyde dehydrogenase family.

It carries out the reaction an aldehyde + NAD(+) + H2O = a carboxylate + NADH + 2 H(+). It participates in mycotoxin biosynthesis. In terms of biological role, aldehyde dehydrogenase; part of the gene cluster that mediates the biosynthesis of the selective antifungal agent ascochitine, an o-quinone methide that plays a possible protective role against other microbial competitors in nature and is considered to be important for pathogenicity of legume-associated Didymella species. The pathway probably begins with the synthesis of a keto-aldehyde intermediate by the ascochitine non-reducing polyketide synthase pksAC from successive condensations of 4 malonyl-CoA units, presumably with a simple acetyl-CoA starter unit. Release of the keto-aldehyde intermediate is consistent with the presence of the C-terminal reductive release domain. The HR-PKS (orf7) probably makes a diketide starter unit which is passed to the non-reducing polyketide synthase pksAC for further extension, producing ascochital and ascochitine. The aldehyde dehydrogenase (orf1), the 2-oxoglutarate-dependent dioxygenase (orf3) and the dehydrogenase (orf9) are probably involved in subsequent oxidations of methyl groups to the carboxylic acid of the heterocyclic ring. The ascochitine gene cluster also includes a gene encoding a short peptide with a cupin domain (orf2) that is often found in secondary metabolite gene clusters and which function has still to be determined. In Didymella fabae (Leaf and pod spot disease fungus), this protein is Aldehyde dehydrogenase.